Reading from the N-terminus, the 239-residue chain is UDP-2,3-diacylglucosamine hydrolase (239 aa).

Positions 8, 10, 41, 78, and 113 each coordinate Mn(2+). 78–79 (NR) is a substrate binding site. Asp-121, Ser-159, Asn-163, Lys-166, and His-194 together coordinate substrate. Mn(2+) contacts are provided by His-194 and His-196.

The protein belongs to the LpxH family. Mn(2+) is required as a cofactor.

The protein resides in the cell inner membrane. It carries out the reaction UDP-2-N,3-O-bis[(3R)-3-hydroxytetradecanoyl]-alpha-D-glucosamine + H2O = 2-N,3-O-bis[(3R)-3-hydroxytetradecanoyl]-alpha-D-glucosaminyl 1-phosphate + UMP + 2 H(+). The protein operates within glycolipid biosynthesis; lipid IV(A) biosynthesis; lipid IV(A) from (3R)-3-hydroxytetradecanoyl-[acyl-carrier-protein] and UDP-N-acetyl-alpha-D-glucosamine: step 4/6. Hydrolyzes the pyrophosphate bond of UDP-2,3-diacylglucosamine to yield 2,3-diacylglucosamine 1-phosphate (lipid X) and UMP by catalyzing the attack of water at the alpha-P atom. Involved in the biosynthesis of lipid A, a phosphorylated glycolipid that anchors the lipopolysaccharide to the outer membrane of the cell. In Shewanella sp. (strain MR-4), this protein is UDP-2,3-diacylglucosamine hydrolase.